Here is a 361-residue protein sequence, read N- to C-terminus: Methylthioribose-1-phosphate isomerase (361 aa).

Residue aspartate 245 is the Proton donor of the active site.

This sequence belongs to the eIF-2B alpha/beta/delta subunits family. MtnA subfamily.

The protein localises to the cytoplasm. It is found in the nucleus. The catalysed reaction is 5-(methylsulfanyl)-alpha-D-ribose 1-phosphate = 5-(methylsulfanyl)-D-ribulose 1-phosphate. The protein operates within amino-acid biosynthesis; L-methionine biosynthesis via salvage pathway; L-methionine from S-methyl-5-thio-alpha-D-ribose 1-phosphate: step 1/6. In terms of biological role, catalyzes the interconversion of methylthioribose-1-phosphate (MTR-1-P) into methylthioribulose-1-phosphate (MTRu-1-P). This Monosiga brevicollis (Choanoflagellate) protein is Methylthioribose-1-phosphate isomerase.